A 442-amino-acid chain; its full sequence is D-serine dehydratase (442 aa).

K118 carries the N6-(pyridoxal phosphate)lysine modification.

Belongs to the serine/threonine dehydratase family. DsdA subfamily. In terms of assembly, monomer. Pyridoxal 5'-phosphate serves as cofactor.

The enzyme catalyses D-serine = pyruvate + NH4(+). This chain is D-serine dehydratase, found in Shigella sonnei (strain Ss046).